A 230-amino-acid chain; its full sequence is N-(5'-phosphoribosyl)anthranilate isomerase (230 aa).

It belongs to the TrpF family.

It catalyses the reaction N-(5-phospho-beta-D-ribosyl)anthranilate = 1-(2-carboxyphenylamino)-1-deoxy-D-ribulose 5-phosphate. It participates in amino-acid biosynthesis; L-tryptophan biosynthesis; L-tryptophan from chorismate: step 3/5. In Syntrophus aciditrophicus (strain SB), this protein is N-(5'-phosphoribosyl)anthranilate isomerase.